The primary structure comprises 431 residues: Synaptotagmin-11 (431 aa).

At 1–15 the chain is on the vesicular side; that stretch reads MAEITNIRPSFDVSP. The helical transmembrane segment at 16 to 36 threads the bilayer; it reads VVAGLIGASVLVVCVSVTVFV. Residues 37-431 are Cytoplasmic-facing; sequence WSCCHQQAEK…VAKWHSLSEY (395 aa). Serine 134 bears the Phosphoserine mark. Residues 134-154 form a disordered region; it reads SPITSLTPGESKTTSPSSPEE. The span at 140–151 shows a compositional bias: low complexity; it reads TPGESKTTSPSS. C2 domains are found at residues 157 to 279 and 291 to 426; these read MLGS…QLTR and SRGE…AKWH. Ca(2+) is bound by residues aspartate 250, serine 253, and aspartate 256.

Belongs to the synaptotagmin family. Homodimer. Can also form heterodimers. Interacts with PRKN. Interacts (via C2 2 domain) with AGO2 and SND1; the interaction with SND1 is direct. Interacts with KIF1A; the interaction increases in presence of calcium. Ca(2+) is required as a cofactor. Ubiquitinated, at least by PRKN, and targeted to the proteasome complex for degradation. Ubiquitination is inhibited by ATP13A2.

It localises to the cytoplasmic vesicle membrane. It is found in the perikaryon. The protein localises to the golgi apparatus. Its subcellular location is the trans-Golgi network membrane. The protein resides in the recycling endosome membrane. It localises to the lysosome membrane. It is found in the cytoplasmic vesicle. The protein localises to the phagosome. Its subcellular location is the cell projection. The protein resides in the axon. It localises to the dendrite. It is found in the postsynaptic density. The protein localises to the clathrin-coated vesicle membrane. Functionally, synaptotagmin family member involved in vesicular and membrane trafficking which does not bind Ca(2+). Inhibits clathrin-mediated and bulk endocytosis, functions to ensure precision in vesicle retrieval. Plays an important role in dopamine transmission by regulating endocytosis and the vesicle-recycling process. Essential component of a neuronal vesicular trafficking pathway that differs from the synaptic vesicle trafficking pathway but is crucial for development and synaptic plasticity. In macrophages and microglia, inhibits the conventional cytokine secretion, of at least IL6 and TNF, and phagocytosis. In astrocytes, regulates lysosome exocytosis, mechanism required for the repair of injured astrocyte cell membrane. Required for the ATP13A2-mediated regulation of the autophagy-lysosome pathway. The protein is Synaptotagmin-11 of Homo sapiens (Human).